Reading from the N-terminus, the 338-residue chain is Tetraacyldisaccharide 4'-kinase (338 aa).

An ATP-binding site is contributed by 67 to 74 (IAGGAGKT).

It belongs to the LpxK family.

It carries out the reaction a lipid A disaccharide + ATP = a lipid IVA + ADP + H(+). It participates in glycolipid biosynthesis; lipid IV(A) biosynthesis; lipid IV(A) from (3R)-3-hydroxytetradecanoyl-[acyl-carrier-protein] and UDP-N-acetyl-alpha-D-glucosamine: step 6/6. Functionally, transfers the gamma-phosphate of ATP to the 4'-position of a tetraacyldisaccharide 1-phosphate intermediate (termed DS-1-P) to form tetraacyldisaccharide 1,4'-bis-phosphate (lipid IVA). The chain is Tetraacyldisaccharide 4'-kinase from Acidovorax ebreus (strain TPSY) (Diaphorobacter sp. (strain TPSY)).